A 274-amino-acid polypeptide reads, in one-letter code: Cytochrome b-c1 complex subunit Rieske, mitochondrial (274 aa).

Topologically, residues 79–103 (SHTDVKVPDFSEYRRPEVLDSTKSS) are mitochondrial matrix. Residues 104–140 (RESSEARKGFSYLVTAVTTVGVAYAAKNAVTQFVSSM) form a helical membrane-spanning segment. At 141-274 (SASADVLALA…FTSDDMVIVG (134 aa)) the chain is on the mitochondrial intermembrane side. Positions 187–272 (EAAVELSQLR…YEFTSDDMVI (86 aa)) constitute a Rieske domain. The [2Fe-2S] cluster site is built by cysteine 217, histidine 219, cysteine 236, histidine 239, and serine 241. Cysteine 222 and cysteine 238 are disulfide-bonded.

It belongs to the Rieske iron-sulfur protein family. As to quaternary structure, component of the ubiquinol-cytochrome c oxidoreductase (cytochrome b-c1 complex, complex III, CIII), a multisubunit enzyme composed of 11 subunits. The complex is composed of 3 respiratory subunits cytochrome b, cytochrome c1 and Rieske protein UQCRFS1, 2 core protein subunits UQCRC1/QCR1 and UQCRC2/QCR2, and 6 low-molecular weight protein subunits UQCRH/QCR6, UQCRB/QCR7, UQCRQ/QCR8, UQCR10/QCR9, UQCR11/QCR10 and subunit 9, the cleavage product of Rieske protein UQCRFS1. The complex exists as an obligatory dimer and forms supercomplexes (SCs) in the inner mitochondrial membrane with NADH-ubiquinone oxidoreductase (complex I, CI) and cytochrome c oxidase (complex IV, CIV), resulting in different assemblies (supercomplex SCI(1)III(2)IV(1) and megacomplex MCI(2)III(2)IV(2)). Incorporation of the Rieske protein UQCRFS1 is the penultimate step in complex III assembly. Interacts with TTC19, which is involved in the clearance of UQCRFS1 fragments. Component of the ubiquinol-cytochrome c oxidoreductase (cytochrome b-c1 complex, complex III, CIII). Subunit 9 corresponds to the mitochondrial targeting sequence (MTS) of Rieske protein UQCRFS1. It is retained after processing and incorporated inside complex III, where it remains bound to the complex and localizes between the 2 core subunits UQCRC1/QCR1 and UQCRC2/QCR2. Requires [2Fe-2S] cluster as cofactor. Post-translationally, proteolytic processing is necessary for the correct insertion of UQCRFS1 in the complex III dimer. Several fragments are generated during UQCRFS1 insertion, most probably due to the endogenous matrix-processing peptidase (MPP) activity of the 2 core protein subunits UQCRC1/QCR1 and UQCRC2/QCR2, which are homologous to the 2 mitochondrial-processing peptidase (MPP) subunits beta-MPP and alpha-MPP respectively. The action of the protease is also necessary for the clearance of the UQCRFS1 fragments.

It localises to the mitochondrion inner membrane. It carries out the reaction a quinol + 2 Fe(III)-[cytochrome c](out) = a quinone + 2 Fe(II)-[cytochrome c](out) + 2 H(+)(out). In terms of biological role, component of the ubiquinol-cytochrome c oxidoreductase, a multisubunit transmembrane complex that is part of the mitochondrial electron transport chain which drives oxidative phosphorylation. The respiratory chain contains 3 multisubunit complexes succinate dehydrogenase (complex II, CII), ubiquinol-cytochrome c oxidoreductase (cytochrome b-c1 complex, complex III, CIII) and cytochrome c oxidase (complex IV, CIV), that cooperate to transfer electrons derived from NADH and succinate to molecular oxygen, creating an electrochemical gradient over the inner membrane that drives transmembrane transport and the ATP synthase. The cytochrome b-c1 complex catalyzes electron transfer from ubiquinol to cytochrome c, linking this redox reaction to translocation of protons across the mitochondrial inner membrane, with protons being carried across the membrane as hydrogens on the quinol. In the process called Q cycle, 2 protons are consumed from the matrix, 4 protons are released into the intermembrane space and 2 electrons are passed to cytochrome c. The Rieske protein is a catalytic core subunit containing a [2Fe-2S] iron-sulfur cluster. It cycles between 2 conformational states during catalysis to transfer electrons from the quinol bound in the Q(0) site in cytochrome b to cytochrome c1. Incorporation of UQCRFS1 is the penultimate step in complex III assembly. Its function is as follows. Component of the ubiquinol-cytochrome c oxidoreductase (cytochrome b-c1 complex, complex III, CIII). UQCRFS1 undergoes proteolytic processing once it is incorporated in the complex III dimer. One of the fragments, called subunit 9, corresponds to its mitochondrial targeting sequence (MTS). The proteolytic processing is necessary for the correct insertion of UQCRFS1 in the complex III dimer, but the persistence of UQCRFS1-derived fragments may prevent newly imported UQCRFS1 to be processed and assembled into complex III and is detrimental for the complex III structure and function. The chain is Cytochrome b-c1 complex subunit Rieske, mitochondrial (UQCRFS1) from Symphalangus syndactylus (Siamang).